Reading from the N-terminus, the 37-residue chain is Large ribosomal subunit protein bL36c (37 aa).

Belongs to the bacterial ribosomal protein bL36 family.

It is found in the plastid. The protein localises to the chloroplast. The chain is Large ribosomal subunit protein bL36c from Phalaenopsis aphrodite subsp. formosana (Moth orchid).